A 288-amino-acid polypeptide reads, in one-letter code: Bifunctional protein FolD (288 aa).

166–168 (GRS) provides a ligand contact to NADP(+).

Belongs to the tetrahydrofolate dehydrogenase/cyclohydrolase family. As to quaternary structure, homodimer.

The catalysed reaction is (6R)-5,10-methylene-5,6,7,8-tetrahydrofolate + NADP(+) = (6R)-5,10-methenyltetrahydrofolate + NADPH. The enzyme catalyses (6R)-5,10-methenyltetrahydrofolate + H2O = (6R)-10-formyltetrahydrofolate + H(+). It functions in the pathway one-carbon metabolism; tetrahydrofolate interconversion. In terms of biological role, catalyzes the oxidation of 5,10-methylenetetrahydrofolate to 5,10-methenyltetrahydrofolate and then the hydrolysis of 5,10-methenyltetrahydrofolate to 10-formyltetrahydrofolate. This Levilactobacillus brevis (strain ATCC 367 / BCRC 12310 / CIP 105137 / JCM 1170 / LMG 11437 / NCIMB 947 / NCTC 947) (Lactobacillus brevis) protein is Bifunctional protein FolD.